The primary structure comprises 585 residues: Arginine--tRNA ligase (585 aa).

Positions 127–137 (PNTNKPLHVGH) match the 'HIGH' region motif.

It belongs to the class-I aminoacyl-tRNA synthetase family. In terms of assembly, monomer.

It localises to the cytoplasm. It catalyses the reaction tRNA(Arg) + L-arginine + ATP = L-arginyl-tRNA(Arg) + AMP + diphosphate. This Borreliella burgdorferi (strain ATCC 35210 / DSM 4680 / CIP 102532 / B31) (Borrelia burgdorferi) protein is Arginine--tRNA ligase (argS).